The chain runs to 221 residues: Oxaloacetate tautomerase FAHD1, mitochondrial (221 aa).

The transit peptide at 1–24 (MAASRPLSRFWEWGKNIVCVGRNY) directs the protein to the mitochondrion. Arg-22 provides a ligand contact to oxalate. Ser-37 is subject to Phosphoserine. Residues Glu-68, Glu-70, and Asp-99 each coordinate Mg(2+). Lys-110 is modified (N6-acetyllysine). An N6-succinyllysine modification is found at Lys-112. The oxalate site is built by Lys-120 and Thr-189.

The protein belongs to the FAH family. In terms of assembly, homodimer. It depends on Mg(2+) as a cofactor. The cofactor is Mn(2+). Ubiquitous (at protein level).

It localises to the mitochondrion. The protein localises to the cytoplasm. It is found in the cytosol. The enzyme catalyses oxaloacetate = enol-oxaloacetate. It carries out the reaction oxaloacetate + H(+) = pyruvate + CO2. It catalyses the reaction a 3-acylpyruvate + H2O = a carboxylate + pyruvate + H(+). The catalysed reaction is acetylpyruvate + H2O = acetate + pyruvate + H(+). The enzyme catalyses 3-fumarylpyruvate + H2O = fumarate + pyruvate + H(+). With respect to regulation, oxaloacetate decarboxylation is competitively inhibited by oxalate. In terms of biological role, tautomerase that converts enol-oxaloacetate, a strong inhibitor of succinate dehydrogenase, to the physiological keto form of oxaloacetate. It is thereby required to maximize aerobic respiration efficiency by preventing succinate dehydrogenase inhibition. Also acts as a weak oxaloacetate decarboxylase (ODx), catalyzing the decarboxylation of oxaloacetate (OAA) to pyruvate and CO(2), and as such is likely a regulatory enzyme in the TCA cycle. Also displays acylpyruvase activity, being able to hydrolyze acetylpyruvate and fumarylpyruvate in vitro. Exhibits only a weak hydrolase activity on methylacetopyruvate and acetylacetone, and no activity toward acetoacetyl-CoA. In Homo sapiens (Human), this protein is Oxaloacetate tautomerase FAHD1, mitochondrial.